The sequence spans 497 residues: 4,4'-diaponeurosporene oxygenase (497 aa).

7 to 19 (VIGGGLGGISAAI) contributes to the FAD binding site.

Belongs to the carotenoid/retinoid oxidoreductase family. CrtP subfamily. FAD serves as cofactor.

The catalysed reaction is all-trans-4,4'-diaponeurosporene + 2 AH2 + 2 O2 = 4,4'-diaponeurosporenal + 2 A + 3 H2O. The protein operates within carotenoid biosynthesis; staphyloxanthin biosynthesis; staphyloxanthin from farnesyl diphosphate: step 3/5. Functionally, involved in the biosynthesis of the yellow-orange carotenoid staphyloxanthin, which plays a role in the virulence via its protective function against oxidative stress. Catalyzes the oxidation of the terminal methyl side group of 4,4'-diaponeurosporene to form 4,4'-diaponeurosporen-4-al. The chain is 4,4'-diaponeurosporene oxygenase from Staphylococcus aureus (strain MSSA476).